A 449-amino-acid polypeptide reads, in one-letter code: Glutamyl-tRNA reductase (449 aa).

Substrate is bound by residues 58–61 (TCNR), Ser-121, 126–128 (ETQ), and Gln-132. Cys-59 acts as the Nucleophile in catalysis. 203-208 (GLGEMA) is an NADP(+) binding site.

It belongs to the glutamyl-tRNA reductase family. In terms of assembly, homodimer.

The enzyme catalyses (S)-4-amino-5-oxopentanoate + tRNA(Glu) + NADP(+) = L-glutamyl-tRNA(Glu) + NADPH + H(+). It participates in porphyrin-containing compound metabolism; protoporphyrin-IX biosynthesis; 5-aminolevulinate from L-glutamyl-tRNA(Glu): step 1/2. Catalyzes the NADPH-dependent reduction of glutamyl-tRNA(Glu) to glutamate 1-semialdehyde (GSA). The polypeptide is Glutamyl-tRNA reductase (Helicobacter pylori (strain G27)).